Consider the following 461-residue polypeptide: Elongation factor 1-alpha (461 aa).

The residue at position 2 (G2) is a N,N,N-trimethylglycine. K3 is modified (N6,N6-dimethyllysine; alternate). K3 bears the N6-methyllysine; alternate mark. Residues 6-241 (KTHINVVVIG…DSIEPPKRPT (236 aa)) form the tr-type G domain. The tract at residues 15–22 (GHVDSGKS) is G1. Position 15 to 22 (15 to 22 (GHVDSGKS)) interacts with GTP. K31 carries the N6-methyllysine modification. Residues 71-75 (GITID) are G2. Position 80 is an N6,N6,N6-trimethyllysine (K80). The segment at 92–95 (DAPG) is G3. Residues 92 to 96 (DAPGH) and 154 to 157 (NKMD) each bind GTP. The interval 154 to 157 (NKMD) is G4. The segment at 193-195 (SGF) is G5. K317 bears the N6,N6-dimethyllysine; alternate mark. Residue K317 is modified to N6-methyllysine; alternate. Position 391 is an N6-methyllysine (K391).

The protein belongs to the TRAFAC class translation factor GTPase superfamily. Classic translation factor GTPase family. EF-Tu/EF-1A subfamily.

The protein resides in the cytoplasm. This protein promotes the GTP-dependent binding of aminoacyl-tRNA to the A-site of ribosomes during protein biosynthesis. The polypeptide is Elongation factor 1-alpha (TEF) (Pseudoechria curvicolla (Podospora curvicolla)).